Here is a 90-residue protein sequence, read N- to C-terminus: Conotoxin Rg9.1 (90 aa).

Positions 1 to 20 are cleaved as a signal peptide; it reads MHLSLARSAVLILLLLFALG. The propeptide occupies 21–60; that stretch reads NFVGVQPGQITRDADHGINLRSLRKQMSRSPLVKGAFCGQ. Intrachain disulfides connect Cys58-Cys71, Cys62-Cys73, and Cys67-Cys80.

Belongs to the conotoxin P superfamily. As to expression, expressed by the venom duct.

The protein localises to the secreted. Probable neurotoxin that inhibits ion channels. The polypeptide is Conotoxin Rg9.1 (Conus regius (Crown cone)).